The primary structure comprises 150 residues: uncharacterized protein (150 aa).

Helical transmembrane passes span 32 to 52, 64 to 84, 94 to 114, and 123 to 143; these read ILYGLIAIFSAMLLTSLAVSL, FNWLITAISFLSLFIGGFISG, IGALTALSFSLIILLFQYLGF, and LIFHLGFLGVCMLGGIFGVNM.

It localises to the cell membrane. This is an uncharacterized protein from Bacillus subtilis (strain 168).